Consider the following 320-residue polypeptide: Phosphate acyltransferase (320 aa).

It belongs to the PlsX family. Homodimer. Probably interacts with PlsY.

It localises to the cytoplasm. It carries out the reaction a fatty acyl-[ACP] + phosphate = an acyl phosphate + holo-[ACP]. Its pathway is lipid metabolism; phospholipid metabolism. Its function is as follows. Catalyzes the reversible formation of acyl-phosphate (acyl-PO(4)) from acyl-[acyl-carrier-protein] (acyl-ACP). This enzyme utilizes acyl-ACP as fatty acyl donor, but not acyl-CoA. In Syntrophomonas wolfei subsp. wolfei (strain DSM 2245B / Goettingen), this protein is Phosphate acyltransferase.